A 218-amino-acid polypeptide reads, in one-letter code: Hypoxanthine-guanine phosphoribosyltransferase (218 aa).

Ala-2 is subject to N-acetylalanine. Lys-69 is a GMP binding site. The residue at position 103 (Lys-103) is an N6-acetyllysine. Lys-115 participates in a covalent cross-link: Glycyl lysine isopeptide (Lys-Gly) (interchain with G-Cter in SUMO1); alternate. Lys-115 participates in a covalent cross-link: Glycyl lysine isopeptide (Lys-Gly) (interchain with G-Cter in SUMO2); alternate. GMP is bound by residues 134 to 142, Lys-166, 186 to 188, and Asp-194; these read EDIIDTGKT and KFV. Asp-138 acts as the Proton acceptor in catalysis. Residue Thr-142 is modified to Phosphothreonine. Asp-194 lines the Mg(2+) pocket.

This sequence belongs to the purine/pyrimidine phosphoribosyltransferase family. As to quaternary structure, homotetramer. It depends on Mg(2+) as a cofactor.

The protein resides in the cytoplasm. The enzyme catalyses IMP + diphosphate = hypoxanthine + 5-phospho-alpha-D-ribose 1-diphosphate. The catalysed reaction is GMP + diphosphate = guanine + 5-phospho-alpha-D-ribose 1-diphosphate. The protein operates within purine metabolism; IMP biosynthesis via salvage pathway; IMP from hypoxanthine: step 1/1. In terms of biological role, converts guanine to guanosine monophosphate, and hypoxanthine to inosine monophosphate. Transfers the 5-phosphoribosyl group from 5-phosphoribosylpyrophosphate onto the purine. Plays a central role in the generation of purine nucleotides through the purine salvage pathway. The chain is Hypoxanthine-guanine phosphoribosyltransferase (HPRT1) from Canis lupus familiaris (Dog).